Consider the following 113-residue polypeptide: Large ribosomal subunit protein uL22 (113 aa).

Belongs to the universal ribosomal protein uL22 family. Part of the 50S ribosomal subunit.

Functionally, this protein binds specifically to 23S rRNA; its binding is stimulated by other ribosomal proteins, e.g. L4, L17, and L20. It is important during the early stages of 50S assembly. It makes multiple contacts with different domains of the 23S rRNA in the assembled 50S subunit and ribosome. In terms of biological role, the globular domain of the protein is located near the polypeptide exit tunnel on the outside of the subunit, while an extended beta-hairpin is found that lines the wall of the exit tunnel in the center of the 70S ribosome. The sequence is that of Large ribosomal subunit protein uL22 from Stenotrophomonas maltophilia (strain K279a).